The following is a 632-amino-acid chain: Chaperone protein HtpG (632 aa).

The interval 1 to 345 is a; substrate-binding; it reads MTTAAHAETL…SKDLSLNVSR (345 aa). Residues 346–561 are b; that stretch reads ELLQKDPQVD…EHDMGYQMRR (216 aa). The segment at 562–632 is c; that stretch reads LMEAAGQPLP…VQRLNKLLSH (71 aa).

It belongs to the heat shock protein 90 family. As to quaternary structure, homodimer.

Its subcellular location is the cytoplasm. In terms of biological role, molecular chaperone. Has ATPase activity. In Chromohalobacter salexigens (strain ATCC BAA-138 / DSM 3043 / CIP 106854 / NCIMB 13768 / 1H11), this protein is Chaperone protein HtpG.